A 231-amino-acid polypeptide reads, in one-letter code: Thymidylate kinase (231 aa).

10-17 provides a ligand contact to ATP; it reads GGEGAGKT.

The protein belongs to the thymidylate kinase family.

It carries out the reaction dTMP + ATP = dTDP + ADP. Functionally, phosphorylation of dTMP to form dTDP in both de novo and salvage pathways of dTTP synthesis. The chain is Thymidylate kinase from Acaryochloris marina (strain MBIC 11017).